The primary structure comprises 554 residues: MAAYLFLLGLFLLLPRPVPAPCYTATRSECKQNHKFVPGVWAAGEGVDVTTLRRSSSFPVNTGKFLRPDRTCTLCKNALMNDGIQRLPVAIAHWRPHGSHCQRNVATTKVSSTEGVAREAAANINNDWRAGLDVNPKPEANVHVSVAGSHSKIANFAAEKAHQDQYNFNTDTVECRMYSFRLAQKPPLHPDFRKALKNLPHNFNSSTEHAYRRLISSYGTHFITAVDLGGRVSVLTALRTCQLTLDGLTADEVGDCLSVEAQVSIGAQASVSSEYKACEEKKKQHKIATSFHQTYRERHVEVLGGPLDSSNDLLFGNQATPEHFSTWIASLPTRPDVVDYSLEPLHILLEDSDPKREALRQAISHYVMSRARWRDCNRPCRAGQHKSSRDSCQCVCQDSNVTNQDCCPRQRGLAKLMVRNFQAKGLWGDYITSTDAYLKVFFGGQEIRTGVVWNNNHPSWSDKMDFGNVLLSTGGPLRVQVWDADNGWDDDLLGTCDKSPKSGFHEVNCPLNHGSIKFIYQANCLPDLTGETCLEYAPQGLLGDPRGNRSGAVW.

The signal sequence occupies residues 1 to 20 (MAAYLFLLGLFLLLPRPVPA). Disulfide bonds link Cys22/Cys75, Cys30/Cys72, and Cys101/Cys175. Positions 26-374 (TRSECKQNHK…HYVMSRARWR (349 aa)) constitute an MACPF domain. A beta stranded membrane pass occupies residues 128-148 (WRAGLDVNPKPEANVHVSVAG). An N-linked (GlcNAc...) asparagine glycan is attached at Asn204. 4 disulfide bridges follow: Cys241-Cys407, Cys376-Cys392, Cys380-Cys394, and Cys396-Cys406. Residues 256 to 278 (CLSVEAQVSIGAQASVSSEYKAC) form a beta stranded membrane-spanning segment. In terms of domain architecture, EGF-like spans 375-407 (DCNRPCRAGQHKSSRDSCQCVCQDSNVTNQDCC). Residues 395-513 (VCQDSNVTNQ…FHEVNCPLNH (119 aa)) enclose the C2 domain. N-linked (GlcNAc...) asparagine glycosylation is present at Asn400. Positions 428, 429, 432, 435, 454, 483, 484, 485, 488, 489, 490, and 491 each coordinate Ca(2+). Disulfide bonds link Cys496–Cys509 and Cys524–Cys533. Asn548 carries an N-linked (GlcNAc...) asparagine glycan.

The protein belongs to the complement C6/C7/C8/C9 family. As to quaternary structure, monomer, as soluble protein. Homooligomer; homooligomerizes to form a pore-forming ring. Ca(2+) is required as a cofactor. N-glycosylated. As to expression, detected in large granular lymphocytes and lymphokine-activated killer cells.

The protein resides in the cytolytic granule. The protein localises to the secreted. Its subcellular location is the cell membrane. It is found in the endosome lumen. In terms of biological role, pore-forming protein that plays a key role in granzyme-mediated programmed cell death, and in defense against virus-infected or neoplastic cells. Can insert into the membrane of target cells in its calcium-bound form, oligomerize and form large pores. Promotes cytolysis and apoptosis of target cells by mediating the passage and uptake of cytotoxic granzymes. Facilitates the delivery of cationic cargo protein, while anionic or neural proteins are not delivered efficiently. Perforin pores allow the release of mature caspase-7 (CASP7) into the extracellular milieu. The polypeptide is Perforin-1 (Prf1) (Rattus norvegicus (Rat)).